Reading from the N-terminus, the 471-residue chain is Galactolipase DONGLE, chloroplastic (471 aa).

The N-terminal 88 residues, 1-88 (MAAKVFTQNP…PLSRVWREIQ (88 aa)), are a transit peptide targeting the chloroplast. Residues 44–71 (SSSTMSPPISSSPLSLPSSSSSQAIPPS) form a disordered region. The GXSXG signature appears at 284 to 288 (GHSMG). Serine 286 acts as the Acyl-ester intermediate in catalysis. Catalysis depends on charge relay system residues aspartate 349 and histidine 400.

Belongs to the AB hydrolase superfamily. Lipase family. As to expression, expressed in leaves and seedlings. Not detected in flowers, siliques or roots.

The protein resides in the plastid. Its subcellular location is the chloroplast. The catalysed reaction is a 1,2-diacyl-3-O-(beta-D-galactosyl)-sn-glycerol + 2 H2O = 3-beta-D-galactosyl-sn-glycerol + 2 a fatty acid + 2 H(+). It carries out the reaction a 1,2-diacyl-sn-glycero-3-phosphocholine + H2O = a 2-acyl-sn-glycero-3-phosphocholine + a fatty acid + H(+). It catalyses the reaction a 1,2-diacyl-3-O-[alpha-D-galactosyl-(1-&gt;6)-beta-D-galactosyl]-sn-glycerol + H2O = acyl-3-O-[alpha-D-galactosyl-(1-&gt;6)-beta-D-galactosyl]-sn-glycerol + a fatty acid + H(+). Functionally, sn-1-specific phospholipase that releases free fatty acids from phosphatidylcholine. Has a higher galactolipase activity than phospholipase A1 activity when digalactosyldiacylglycerol (DGDG) is used as substrate. Catalyzes the initial step of jasmonic acid biosynthesis. Required for the biosynthesis of basal-level endogenous jasmonate in vegetative tissues. Regulates leaves growth. Not essential for jasmonate biosynthesis after wounding or upon pathogen infection. This is Galactolipase DONGLE, chloroplastic from Arabidopsis thaliana (Mouse-ear cress).